We begin with the raw amino-acid sequence, 158 residues long: Protein E6 (158 aa).

2 zinc fingers span residues cysteine 32–cysteine 68 and cysteine 105–cysteine 141. Residues threonine 156–valine 158 carry the PDZ-binding domain motif.

Belongs to the papillomaviridae E6 protein family. As to quaternary structure, forms homodimers. Interacts with ubiquitin-protein ligase UBE3A/E6-AP and thus forms a complex with human TP53. Interacts with human NFX1 and MAGI3. Interacts with human IRF3; this interaction inhibits the establishment of antiviral state. Interacts with human TYK2; this interaction inhibits JAK-STAT activation by interferon alpha. Interacts with host DLG1; this interaction leads to the proteasomal degradation of DLG1.

Its subcellular location is the host cytoplasm. The protein localises to the host nucleus. Functionally, plays a major role in the induction and maintenance of cellular transformation. Acts mainly as an oncoprotein by stimulating the destruction of many host cell key regulatory proteins. E6 associates with host UBE3A/E6-AP ubiquitin-protein ligase, and inactivates tumor suppressors TP53 and TP73 by targeting them to the 26S proteasome for degradation. In turn, DNA damage and chromosomal instabilities increase and lead to cell proliferation and cancer development. The complex E6/E6AP targets several other substrates to degradation via the proteasome including host DLG1 or NFX1, a repressor of human telomerase reverse transcriptase (hTERT). The resulting increased expression of hTERT prevents the shortening of telomere length leading to cell immortalization. Other cellular targets including BAK1, Fas-associated death domain-containing protein (FADD) and procaspase 8, are degraded by E6/E6AP causing inhibition of apoptosis. E6 also inhibits immune response by interacting with host IRF3 and TYK2. These interactions prevent IRF3 transcriptional activities and inhibit TYK2-mediated JAK-STAT activation by interferon alpha resulting in inhibition of the interferon signaling pathway. This is Protein E6 from Homo sapiens (Human).